The sequence spans 910 residues: Dimethylsulfide dehydrogenase subunit alpha (910 aa).

A signal peptide (tat-type signal) is located at residues methionine 1–alanine 28. The 4Fe-4S Mo/W bis-MGD-type domain maps to aspartate 59 to aspartate 123. The [4Fe-4S] cluster site is built by histidine 66, cysteine 70, cysteine 74, and cysteine 109.

The protein belongs to the prokaryotic molybdopterin-containing oxidoreductase family. As to quaternary structure, heterotrimer of alpha, beta and gamma subunits. [4Fe-4S] cluster serves as cofactor. Requires Mo-bis(molybdopterin guanine dinucleotide) as cofactor. Predicted to be exported by the Tat system. The position of the signal peptide cleavage has been experimentally proven.

It is found in the periplasm. The enzyme catalyses 2 Fe(III)-[cytochrome c2] + dimethyl sulfide + H2O = 2 Fe(II)-[cytochrome c2] + dimethyl sulfoxide + 2 H(+). In terms of biological role, allows photoautotrophic growth on dimethyl sulfide (DMS) as the sole electron donor. The chain is Dimethylsulfide dehydrogenase subunit alpha (ddhA) from Rhodovulum sulfidophilum (Rhodobacter sulfidophilus).